The sequence spans 200 residues: Phosphoheptose isomerase (200 aa).

Positions 37 to 199 (VLGCITAGGK…DVQLLGEQDL (163 aa)) constitute an SIS domain. A substrate-binding site is contributed by 52–54 (NGG). 2 residues coordinate Zn(2+): histidine 61 and glutamate 65. Substrate is bound by residues glutamate 65, 94–95 (ND), 120–122 (TTS), serine 125, and glutamine 175. Zn(2+)-binding residues include glutamine 175 and histidine 183.

This sequence belongs to the SIS family. GmhA subfamily. In terms of assembly, homotetramer. Zn(2+) serves as cofactor.

The protein resides in the cytoplasm. It carries out the reaction 2 D-sedoheptulose 7-phosphate = D-glycero-alpha-D-manno-heptose 7-phosphate + D-glycero-beta-D-manno-heptose 7-phosphate. It participates in carbohydrate biosynthesis; D-glycero-D-manno-heptose 7-phosphate biosynthesis; D-glycero-alpha-D-manno-heptose 7-phosphate and D-glycero-beta-D-manno-heptose 7-phosphate from sedoheptulose 7-phosphate: step 1/1. Catalyzes the isomerization of sedoheptulose 7-phosphate in D-glycero-D-manno-heptose 7-phosphate. This is Phosphoheptose isomerase from Methylibium petroleiphilum (strain ATCC BAA-1232 / LMG 22953 / PM1).